The chain runs to 289 residues: tRNA dimethylallyltransferase (289 aa).

9-16 (GTTASGKT) is a binding site for ATP. Residue 11–16 (TASGKT) participates in substrate binding. The interval 34–37 (DSLC) is interaction with substrate tRNA.

Belongs to the IPP transferase family. As to quaternary structure, monomer. Mg(2+) serves as cofactor.

The enzyme catalyses adenosine(37) in tRNA + dimethylallyl diphosphate = N(6)-dimethylallyladenosine(37) in tRNA + diphosphate. Functionally, catalyzes the transfer of a dimethylallyl group onto the adenine at position 37 in tRNAs that read codons beginning with uridine, leading to the formation of N6-(dimethylallyl)adenosine (i(6)A). This is tRNA dimethylallyltransferase from Campylobacter jejuni subsp. doylei (strain ATCC BAA-1458 / RM4099 / 269.97).